Here is a 217-residue protein sequence, read N- to C-terminus: ATP-dependent Clp protease proteolytic subunit 3 (217 aa).

A compositionally biased stretch (low complexity) spans 1–13; sequence MSPFTAGPAPART. Residues 1–23 are disordered; the sequence is MSPFTAGPAPARTPRAEEGDTPA. Catalysis depends on S108, which acts as the Nucleophile. Residue H133 is part of the active site.

This sequence belongs to the peptidase S14 family. In terms of assembly, fourteen ClpP subunits assemble into 2 heptameric rings which stack back to back to give a disk-like structure with a central cavity, resembling the structure of eukaryotic proteasomes.

It is found in the cytoplasm. The catalysed reaction is Hydrolysis of proteins to small peptides in the presence of ATP and magnesium. alpha-casein is the usual test substrate. In the absence of ATP, only oligopeptides shorter than five residues are hydrolyzed (such as succinyl-Leu-Tyr-|-NHMec, and Leu-Tyr-Leu-|-Tyr-Trp, in which cleavage of the -Tyr-|-Leu- and -Tyr-|-Trp bonds also occurs).. Cleaves peptides in various proteins in a process that requires ATP hydrolysis. Has a chymotrypsin-like activity. Plays a major role in the degradation of misfolded proteins. This is ATP-dependent Clp protease proteolytic subunit 3 from Streptomyces coelicolor (strain ATCC BAA-471 / A3(2) / M145).